Here is a 142-residue protein sequence, read N- to C-terminus: MKTISAKPETVKRDWYVIDATDKTLGRLSTEIARRLRGKHKAEYTPHVDTGDYIVVVNAEKVRVTGNKAQDKMYYRHTGYPGGLKEMSFDKLIQHAPERVIETAVKGMMPRNPLGRAMLKKLKVYASAEHPHTAQQPIELKI.

Belongs to the universal ribosomal protein uL13 family. In terms of assembly, part of the 50S ribosomal subunit.

Functionally, this protein is one of the early assembly proteins of the 50S ribosomal subunit, although it is not seen to bind rRNA by itself. It is important during the early stages of 50S assembly. This is Large ribosomal subunit protein uL13 from Hahella chejuensis (strain KCTC 2396).